The chain runs to 718 residues: Tegument protein UL46 (718 aa).

Disordered stretches follow at residues 433-510 and 581-611; these read SAGP…EPPA and TADDDDDDARRKATHAASARERHAPYEDDES. Gly residues predominate over residues 444-454; it reads GPGGHRAGGGT. Over residues 455–467 the composition is skewed to basic and acidic residues; sequence CREKIQRARRDNE.

The protein belongs to the herpesviridae HHV-1 VP11/12 protein family. Interacts with VP16. Interacts with host LCK, PIK3R1, SHC1 AND GRB2; these interactions promote the activation of the PI3K/AKT pathway. Interacts with host YWHAB. Interacts with ICP0; this interaction targets UL46 for degradation by the proteasome. Interacts (via N-terminus) with host TMEM173. Interacts (via C-terminus) with host TBK1. Interacts with host DOK2. Post-translationally, phosphorylated by host LCK. The phosphorylation seems to be lymphocyte-specific.

The protein localises to the virion tegument. It localises to the host cytoplasm. Its subcellular location is the host cell membrane. Plays a role in the activation of the host PI3K/AKT pathway to promote cell survival. Interacts with and activates host LCK and thereby recruits downstream partners SHC1, GRB2 and PI3KR1 in order to activate the PI3K pathway by phosphorylating host AKT on its activating residues. This mechanism is inhibited by the viral protein US3 that instead promotes incorporation of UL46 into virions. Plays a role in the inhibition of TMEM173/STING-mediated type I interferon production. Interacts with host DOK2 and induces its degradation. This immune evasion mechanism to inactivate T-cells may play an important role during pathogenesis. The protein is Tegument protein UL46 of Homo sapiens (Human).